The chain runs to 117 residues: Huntingtin-interacting protein M (117 aa).

Composition is skewed to basic and acidic residues over residues 1–11 (MSEKKSQEKPC) and 83–97 (QDRE…EPSR). Disordered stretches follow at residues 1 to 25 (MSEK…SRPE) and 74 to 117 (NINN…RRNG).

In terms of assembly, may interact with the N-terminus of HD.

This Mus musculus (Mouse) protein is Huntingtin-interacting protein M.